A 235-amino-acid polypeptide reads, in one-letter code: Small ribosomal subunit protein uS2 (235 aa).

It belongs to the universal ribosomal protein uS2 family.

The chain is Small ribosomal subunit protein uS2 from Geobacillus kaustophilus (strain HTA426).